Here is a 44-residue protein sequence, read N- to C-terminus: Photosystem I reaction center subunit IX (44 aa).

A helical transmembrane segment spans residues 9–29 (WFRSAPVVATIWIVLTAGILV).

Belongs to the PsaJ family.

Its subcellular location is the cellular thylakoid membrane. Functionally, may help in the organization of the PsaE and PsaF subunits. The protein is Photosystem I reaction center subunit IX of Prochlorococcus marinus (strain MIT 9211).